Consider the following 464-residue polypeptide: Glutamate--tRNA ligase 1 (464 aa).

The 'HIGH' region motif lies at 8-18; it reads PSPTGHLHVGG. A 'KMSKS' region motif is present at residues 231–235; the sequence is PLSKR. K234 serves as a coordination point for ATP.

Belongs to the class-I aminoacyl-tRNA synthetase family. Glutamate--tRNA ligase type 1 subfamily. In terms of assembly, monomer.

It is found in the cytoplasm. It carries out the reaction tRNA(Glu) + L-glutamate + ATP = L-glutamyl-tRNA(Glu) + AMP + diphosphate. Catalyzes the attachment of glutamate to tRNA(Glu) in a two-step reaction: glutamate is first activated by ATP to form Glu-AMP and then transferred to the acceptor end of tRNA(Glu). This Thermotoga sp. (strain RQ2) protein is Glutamate--tRNA ligase 1.